Here is a 493-residue protein sequence, read N- to C-terminus: Glutamyl-tRNA(Gln) amidotransferase subunit A (493 aa).

Residues Lys79 and Ser159 each act as charge relay system in the active site. Ser183 (acyl-ester intermediate) is an active-site residue.

Belongs to the amidase family. GatA subfamily. In terms of assembly, heterotrimer of A, B and C subunits.

It carries out the reaction L-glutamyl-tRNA(Gln) + L-glutamine + ATP + H2O = L-glutaminyl-tRNA(Gln) + L-glutamate + ADP + phosphate + H(+). Functionally, allows the formation of correctly charged Gln-tRNA(Gln) through the transamidation of misacylated Glu-tRNA(Gln) in organisms which lack glutaminyl-tRNA synthetase. The reaction takes place in the presence of glutamine and ATP through an activated gamma-phospho-Glu-tRNA(Gln). In Rhizobium etli (strain ATCC 51251 / DSM 11541 / JCM 21823 / NBRC 15573 / CFN 42), this protein is Glutamyl-tRNA(Gln) amidotransferase subunit A.